Here is a 270-residue protein sequence, read N- to C-terminus: Phosphatidylglycerol--prolipoprotein diacylglyceryl transferase (270 aa).

The next 7 helical transmembrane spans lie at Val-14–Phe-34, Leu-60–Tyr-80, Val-95–Ile-115, Ala-128–Ile-148, Ser-176–Ile-196, Ile-202–Phe-222, and Ile-238–Val-258. A 1,2-diacyl-sn-glycero-3-phospho-(1'-sn-glycerol) is bound at residue Arg-143.

The protein belongs to the Lgt family.

The protein localises to the cell inner membrane. The enzyme catalyses L-cysteinyl-[prolipoprotein] + a 1,2-diacyl-sn-glycero-3-phospho-(1'-sn-glycerol) = an S-1,2-diacyl-sn-glyceryl-L-cysteinyl-[prolipoprotein] + sn-glycerol 1-phosphate + H(+). Its pathway is protein modification; lipoprotein biosynthesis (diacylglyceryl transfer). Its function is as follows. Catalyzes the transfer of the diacylglyceryl group from phosphatidylglycerol to the sulfhydryl group of the N-terminal cysteine of a prolipoprotein, the first step in the formation of mature lipoproteins. The protein is Phosphatidylglycerol--prolipoprotein diacylglyceryl transferase of Pasteurella multocida (strain Pm70).